Here is a 318-residue protein sequence, read N- to C-terminus: Pantothenate kinase (318 aa).

96 to 103 (GSVAVGKS) is a binding site for ATP.

Belongs to the prokaryotic pantothenate kinase family.

It is found in the cytoplasm. It catalyses the reaction (R)-pantothenate + ATP = (R)-4'-phosphopantothenate + ADP + H(+). It functions in the pathway cofactor biosynthesis; coenzyme A biosynthesis; CoA from (R)-pantothenate: step 1/5. This is Pantothenate kinase from Afipia carboxidovorans (strain ATCC 49405 / DSM 1227 / KCTC 32145 / OM5) (Oligotropha carboxidovorans).